The following is a 288-amino-acid chain: Small ribosomal subunit protein uS3 (288 aa).

The KH type-2 domain occupies 38 to 106 (IRRMMSKGLE…QVQLNIIEVK (69 aa)). A disordered region spans residues 209–288 (PGRETPAEAP…TQPAETQQEG (80 aa)). Residues 219–232 (SRPRRERGDRSERP) are compositionally biased toward basic and acidic residues. The span at 249–264 (AGRAAATTIAQAAETP) shows a compositional bias: low complexity. Residues 277 to 288 (AATQPAETQQEG) show a composition bias toward polar residues.

This sequence belongs to the universal ribosomal protein uS3 family. As to quaternary structure, part of the 30S ribosomal subunit. Forms a tight complex with proteins S10 and S14.

Its function is as follows. Binds the lower part of the 30S subunit head. Binds mRNA in the 70S ribosome, positioning it for translation. In Salinispora tropica (strain ATCC BAA-916 / DSM 44818 / JCM 13857 / NBRC 105044 / CNB-440), this protein is Small ribosomal subunit protein uS3.